A 683-amino-acid chain; its full sequence is U4/U6 small nuclear ribonucleoprotein Prp3 (683 aa).

Positions 1-87 (MALSKRELDE…HSKSSSDRSR (87 aa)) constitute a PWI domain. Over residues 73–107 (GRSSRHSKSSSDRSRKRELKEVFGDDSEISKESSG) the composition is skewed to basic and acidic residues. The interval 73–135 (GRSSRHSKSS…IPGPPSESPG (63 aa)) is disordered. A Glycyl lysine isopeptide (Lys-Gly) (interchain with G-Cter in SUMO2) cross-link involves residue Lys139. The disordered stretch occupies residues 153-183 (IEERKKQLSFISPPTPQPKTPSSSQPERLPI). A Phosphoserine modification is found at Ser164. Position 167 is a phosphothreonine (Thr167). Residues Lys244 and Lys252 each participate in a glycyl lysine isopeptide (Lys-Gly) (interchain with G-Cter in SUMO2) cross-link. The tract at residues 416-550 (NLVEHPAQLN…VHISVYRVRN (135 aa)) is mediates interaction with SART3. Ser619 is modified (phosphoserine).

Component of the precatalytic spliceosome (spliceosome B complex). Component of the U4/U6-U5 tri-snRNP complex, a building block of the precatalytic spliceosome (spliceosome B complex). The U4/U6-U5 tri-snRNP complex is composed of the U4, U6 and U5 snRNAs and at least PRPF3, PRPF4, PRPF6, PRPF8, PRPF31, SNRNP200, TXNL4A, SNRNP40, SNRPB, SNRPD1, SNRPD2, SNRPD3, SNRPE, SNRPF, SNRPG, DDX23, CD2BP2, PPIH, SNU13, EFTUD2, SART1 and USP39, plus LSM2, LSM3, LSM4, LSM5, LSM6, LSM7 and LSM8. Interacts directly with PRPF4. Part of a heteromeric complex containing PPIH, PRPF3 and PRPF4 that is stable in the absence of RNA. Interacts with SART3; the interaction is direct and recruits the deubiquitinase USP4 to PRPF3. Interacts with PRPF19. Interacts ('Lys-63'-linked polyubiquitinated) with PRPF8 (via the MPN (JAB/Mov34) domain); may stabilize the U4/U6-U5 tri-snRNP complex. Interacts with ERCC6. In terms of processing, ubiquitinated. Undergoes 'Lys-63'-linked polyubiquitination by PRPF19 and deubiquitination by USP4. 'Lys-63'-linked ubiquitination increases the affinity for PRPF8 and may regulate the assembly of the U4/U6-U5 tri-snRNP complex.

Its subcellular location is the nucleus. The protein localises to the nucleus speckle. Functionally, plays a role in pre-mRNA splicing as component of the U4/U6-U5 tri-snRNP complex that is involved in spliceosome assembly, and as component of the precatalytic spliceosome (spliceosome B complex). This Pongo abelii (Sumatran orangutan) protein is U4/U6 small nuclear ribonucleoprotein Prp3 (PRPF3).